Here is a 419-residue protein sequence, read N- to C-terminus: Glutamyl-tRNA reductase (419 aa).

Substrate is bound by residues 49 to 52, S107, 112 to 114, and Q118; these read TCNR and EPQ. The active-site Nucleophile is C50. 187-192 contributes to the NADP(+) binding site; the sequence is GAGETI.

Belongs to the glutamyl-tRNA reductase family. In terms of assembly, homodimer.

The enzyme catalyses (S)-4-amino-5-oxopentanoate + tRNA(Glu) + NADP(+) = L-glutamyl-tRNA(Glu) + NADPH + H(+). The protein operates within porphyrin-containing compound metabolism; protoporphyrin-IX biosynthesis; 5-aminolevulinate from L-glutamyl-tRNA(Glu): step 1/2. Catalyzes the NADPH-dependent reduction of glutamyl-tRNA(Glu) to glutamate 1-semialdehyde (GSA). The chain is Glutamyl-tRNA reductase from Psychromonas ingrahamii (strain DSM 17664 / CCUG 51855 / 37).